The primary structure comprises 467 residues: tRNA modification GTPase MnmE (467 aa).

(6S)-5-formyl-5,6,7,8-tetrahydrofolate-binding residues include arginine 30, glutamate 92, and arginine 131. In terms of domain architecture, TrmE-type G spans 226–388 (GLKVAIIGRP…LEAAILNAVN (163 aa)). K(+) is bound at residue asparagine 236. Residues 236–241 (NVGKSS), 255–261 (TDLPGTT), and 280–283 (DTAG) contribute to the GTP site. Serine 240 provides a ligand contact to Mg(2+). Residues threonine 255, leucine 257, and threonine 260 each coordinate K(+). Residue threonine 261 participates in Mg(2+) binding. A (6S)-5-formyl-5,6,7,8-tetrahydrofolate-binding site is contributed by lysine 467.

The protein belongs to the TRAFAC class TrmE-Era-EngA-EngB-Septin-like GTPase superfamily. TrmE GTPase family. Homodimer. Heterotetramer of two MnmE and two MnmG subunits. It depends on K(+) as a cofactor.

The protein resides in the cytoplasm. In terms of biological role, exhibits a very high intrinsic GTPase hydrolysis rate. Involved in the addition of a carboxymethylaminomethyl (cmnm) group at the wobble position (U34) of certain tRNAs, forming tRNA-cmnm(5)s(2)U34. This is tRNA modification GTPase MnmE from Trichodesmium erythraeum (strain IMS101).